A 128-amino-acid polypeptide reads, in one-letter code: Large-conductance mechanosensitive channel (128 aa).

Over 1–16 the chain is Cytoplasmic; sequence MNFIKEFREFAMRGNV. The chain crosses the membrane as a helical span at residues 17–45; that stretch reads VDMAVGVIIGSAFGKIVSSLVSDIFTPVL. Over 46 to 74 the chain is Periplasmic; that stretch reads GILTGGIDFKDMKFVLAQAQGDVPAVTLN. A helical membrane pass occupies residues 75-94; the sequence is YGLFIQNVIDFIIIAFAIFM. Topologically, residues 95 to 128 are cytoplasmic; the sequence is MIKVINKVRKPEEKKTAPKAETLLTEIRDLLKNK.

This sequence belongs to the MscL family. As to quaternary structure, homopentamer.

The protein resides in the cell inner membrane. Its function is as follows. Channel that opens in response to stretch forces in the membrane lipid bilayer. Forms a nonselective ion channel with a conductance of about 4 nanosiemens. May participate in the regulation of osmotic pressure changes within the cell. This is Large-conductance mechanosensitive channel from Haemophilus influenzae (strain ATCC 51907 / DSM 11121 / KW20 / Rd).